We begin with the raw amino-acid sequence, 245 residues long: Purine nucleoside phosphorylase (245 aa).

Position 8 (H8) interacts with a purine D-ribonucleoside. Phosphate is bound by residues 24–28, R46, and 89–92; these read GDPGR and RAGS. A purine D-ribonucleoside is bound at residue 184–185; sequence ME. D207 serves as the catalytic Proton donor.

It belongs to the PNP/MTAP phosphorylase family. In terms of assembly, homohexamer; trimer of homodimers.

The catalysed reaction is inosine + phosphate = alpha-D-ribose 1-phosphate + hypoxanthine. It carries out the reaction guanosine + phosphate = alpha-D-ribose 1-phosphate + guanine. The enzyme catalyses 2'-deoxyguanosine + phosphate = 2-deoxy-alpha-D-ribose 1-phosphate + guanine. It catalyses the reaction 2'-deoxyinosine + phosphate = 2-deoxy-alpha-D-ribose 1-phosphate + hypoxanthine. Its pathway is purine metabolism; purine nucleoside salvage. In terms of biological role, as part of the purine salvage pathway, catalyzes the phosphorolytic breakdown of the N-glycosidic bond in the beta-(deoxy)ribonucleoside molecules, with the formation of the corresponding free purine bases and pentose-1-phosphate. Preferentially acts on inosine and guanosine, and to a lesser extent on 2'-deoxyinosine and 2'-deoxyguanosine. The protein is Purine nucleoside phosphorylase of Plasmodium vivax (strain Salvador I).